A 465-amino-acid chain; its full sequence is 3-isopropylmalate dehydratase large subunit (465 aa).

[4Fe-4S] cluster-binding residues include C347, C407, and C410.

Belongs to the aconitase/IPM isomerase family. LeuC type 1 subfamily. In terms of assembly, heterodimer of LeuC and LeuD. It depends on [4Fe-4S] cluster as a cofactor.

The catalysed reaction is (2R,3S)-3-isopropylmalate = (2S)-2-isopropylmalate. It functions in the pathway amino-acid biosynthesis; L-leucine biosynthesis; L-leucine from 3-methyl-2-oxobutanoate: step 2/4. In terms of biological role, catalyzes the isomerization between 2-isopropylmalate and 3-isopropylmalate, via the formation of 2-isopropylmaleate. In Aeromonas salmonicida (strain A449), this protein is 3-isopropylmalate dehydratase large subunit.